The following is a 127-amino-acid chain: MRGEGKNDNKTLGEVGEAIAVTFLKGLHFSILERNFRCKCGEIDIIARDGRTLVFVEVKTRKNTAFGVPQLAVTPFKQRQISKAALTWLAQKKMQDAAARFDVIAILQPDHAVPEIEHIKDAFDLAY.

The protein belongs to the UPF0102 family.

This chain is UPF0102 protein Geob_1494, found in Geotalea daltonii (strain DSM 22248 / JCM 15807 / FRC-32) (Geobacter daltonii).